The sequence spans 304 residues: Opsin-1 (304 aa).

The Extracellular segment spans residues 1 to 45; sequence MIHPEQVADMLRPTTSTTSSHVPGPVPTVVPTPTEYQTLGETGHR. A helical transmembrane segment spans residues 46–66; sequence TLWVTFALMVLSSGIFALLSW. A helical membrane pass occupies residues 74-94; it reads LFHVITTLITVVASLSYFAMA. The helical transmembrane segment at 129–149 threads the bilayer; sequence YVDWALTTPLLLLELCLLAGV. A helical membrane pass occupies residues 154–174; it reads TLMAIVADVIMVLCGLFAALG. Residues 183 to 203 form a helical membrane-spanning segment; that stretch reads WGWYTIGCFSYLFVIWHVALH. The helical transmembrane segment at 219–239 threads the bilayer; sequence FTGLAVFALLLWTAYPIIWGI. Residues 252-272 traverse the membrane as a helical segment; the sequence is ILIYTVLDLLAKPVFGFWLLL. Lys263 carries the N6-(retinylidene)lysine modification. The Cytoplasmic portion of the chain corresponds to 273-304; the sequence is SHRAMPETNIDLPGYWSHGLATEGRIRIGEED.

The protein belongs to the archaeal/bacterial/fungal opsin family. Post-translationally, binds all-trans retinal via a protonated Schiff base linkage.

Its subcellular location is the membrane. Could facilitate a sensory photoresponse. This chain is Opsin-1 (nop-1), found in Neurospora crassa (strain ATCC 24698 / 74-OR23-1A / CBS 708.71 / DSM 1257 / FGSC 987).